Consider the following 417-residue polypeptide: Mitochondrial tRNA-specific 2-thiouridylase 1 (417 aa).

ATP-binding positions include 32–39 (AMSSGVDS) and Met-58. The interval 122–124 (NPD) is interaction with target base in tRNA. Cys-127 acts as the Nucleophile in catalysis. Cys-127 and Cys-229 are oxidised to a cystine. Gly-154 is a binding site for ATP. Positions 179–181 (KDQ) are interaction with tRNA. Cys-229 serves as the catalytic Cysteine persulfide intermediate. Residues 354 to 355 (RS) form an interaction with tRNA region.

Belongs to the MnmA/TRMU family.

The protein resides in the mitochondrion. It catalyses the reaction 5-taurinomethyluridine(34) in tRNA + S-sulfanyl-L-cysteinyl-[protein] + AH2 + ATP = 5-taurinomethyl-2-thiouridine(34) in tRNA + L-cysteinyl-[protein] + A + AMP + diphosphate + H(+). Catalyzes the 2-thiolation of uridine at the wobble position (U34) of mitochondrial tRNA(Lys), tRNA(Glu) and tRNA(Gln). Required for the formation of 5-taurinomethyl-2-thiouridine (tm5s2U) of mitochondrial tRNA(Lys), tRNA(Glu), and tRNA(Gln) at the wobble position. ATP is required to activate the C2 atom of the wobble base. This Saccharomyces cerevisiae (strain ATCC 204508 / S288c) (Baker's yeast) protein is Mitochondrial tRNA-specific 2-thiouridylase 1 (SLM3).